We begin with the raw amino-acid sequence, 378 residues long: Mannitol-1-phosphate 5-dehydrogenase (378 aa).

Residue 4 to 15 (SVHFGAGNIGRG) participates in NAD(+) binding.

The protein belongs to the mannitol dehydrogenase family.

The catalysed reaction is D-mannitol 1-phosphate + NAD(+) = beta-D-fructose 6-phosphate + NADH + H(+). The polypeptide is Mannitol-1-phosphate 5-dehydrogenase (Streptococcus pneumoniae (strain CGSP14)).